We begin with the raw amino-acid sequence, 551 residues long: Chitinase (551 aa).

The first 17 residues, 1-17 (MLYKLLNVLWLVAVSNA), serve as a signal peptide directing secretion. A chitin binding domain (CBD) region spans residues 1 to 149 (MLYKLLNVLW…NKPGRREDKI (149 aa)). The GH18 domain occupies 148–548 (KIVAAYFVEW…NAINAQFKPK (401 aa)). An N-linked (GlcNAc...) asparagine; by host glycan is attached at asparagine 173. Catalysis depends on glutamate 305, which acts as the Proton donor. Residue asparagine 444 is glycosylated (N-linked (GlcNAc...) asparagine; by host). A Prevents secretion from ER motif is present at residues 548–551 (KDEL).

It belongs to the glycosyl hydrolase 18 family. Chitinase class II subfamily. In terms of assembly, interacts with host VCATH.

It is found in the host endoplasmic reticulum lumen. It carries out the reaction Random endo-hydrolysis of N-acetyl-beta-D-glucosaminide (1-&gt;4)-beta-linkages in chitin and chitodextrins.. In terms of biological role, plays a role in host liquefaction to facilitate horizontal transmission of the virus by hydrolyzing beta-chitin and by regulating the cysteine protease VCATH. Localized in the host reticulum endoplasmic via its KDEL motif, interacts with and thus prevents VCATH secretion before host cell lysis occurs. This Lepidoptera (butterflies and moths) protein is Chitinase (CHIA).